The chain runs to 313 residues: Porphobilinogen deaminase (313 aa).

Cysteine 242 carries the S-(dipyrrolylmethanemethyl)cysteine modification.

Belongs to the HMBS family. Monomer. Dipyrromethane is required as a cofactor.

It carries out the reaction 4 porphobilinogen + H2O = hydroxymethylbilane + 4 NH4(+). The protein operates within porphyrin-containing compound metabolism; protoporphyrin-IX biosynthesis; coproporphyrinogen-III from 5-aminolevulinate: step 2/4. Its function is as follows. Tetrapolymerization of the monopyrrole PBG into the hydroxymethylbilane pre-uroporphyrinogen in several discrete steps. The chain is Porphobilinogen deaminase from Escherichia fergusonii (strain ATCC 35469 / DSM 13698 / CCUG 18766 / IAM 14443 / JCM 21226 / LMG 7866 / NBRC 102419 / NCTC 12128 / CDC 0568-73).